Consider the following 579-residue polypeptide: Probable zinc metalloprotease EGY1, chloroplastic (579 aa).

Disordered regions lie at residues 1-42 and 78-146; these read MAAA…PASA and GGGG…NEPP. The N-terminal 44 residues, 1 to 44, are a transit peptide targeting the chloroplast; the sequence is MAAAAAALASSPMVHLTASRLRLPRPARSPAAATPSPSPASAAC. Low complexity predominate over residues 16–42; that stretch reads LTASRLRLPRPARSPAAATPSPSPASA. A compositionally biased stretch (gly residues) spans 78 to 92; it reads GGGGGGGGGGGGTGG. Low complexity-rich tracts occupy residues 104–115 and 125–137; these read AAAAEAKVGGAV and SGSF…SSSG. 8 helical membrane-spanning segments follow: residues 272 to 292, 321 to 341, 357 to 377, 392 to 412, 419 to 439, 452 to 472, 505 to 525, and 547 to 567; these read YVIS…LGIA, LLPF…IQLF, LSIP…ITQF, MAGP…GLLL, ASDL…LGLV, ATVA…TTAF, LLGL…YVLI, and AALI…WDEL.

It belongs to the peptidase M50B family.

The protein resides in the plastid. The protein localises to the chloroplast membrane. In terms of biological role, probable membrane-associated metalloprotease that may be involved in chloroplast development. The polypeptide is Probable zinc metalloprotease EGY1, chloroplastic (EGY1) (Oryza sativa subsp. japonica (Rice)).